The chain runs to 440 residues: Exodeoxyribonuclease 7 large subunit (440 aa).

It belongs to the XseA family. As to quaternary structure, heterooligomer composed of large and small subunits.

The protein localises to the cytoplasm. The catalysed reaction is Exonucleolytic cleavage in either 5'- to 3'- or 3'- to 5'-direction to yield nucleoside 5'-phosphates.. Its function is as follows. Bidirectionally degrades single-stranded DNA into large acid-insoluble oligonucleotides, which are then degraded further into small acid-soluble oligonucleotides. This chain is Exodeoxyribonuclease 7 large subunit, found in Ralstonia nicotianae (strain ATCC BAA-1114 / GMI1000) (Ralstonia solanacearum).